Consider the following 462-residue polypeptide: ATP synthase subunit beta (462 aa).

152-159 provides a ligand contact to ATP; that stretch reads GGAGVGKT.

Belongs to the ATPase alpha/beta chains family. F-type ATPases have 2 components, CF(1) - the catalytic core - and CF(0) - the membrane proton channel. CF(1) has five subunits: alpha(3), beta(3), gamma(1), delta(1), epsilon(1). CF(0) has three main subunits: a(1), b(2) and c(9-12). The alpha and beta chains form an alternating ring which encloses part of the gamma chain. CF(1) is attached to CF(0) by a central stalk formed by the gamma and epsilon chains, while a peripheral stalk is formed by the delta and b chains.

Its subcellular location is the cell inner membrane. The catalysed reaction is ATP + H2O + 4 H(+)(in) = ADP + phosphate + 5 H(+)(out). Produces ATP from ADP in the presence of a proton gradient across the membrane. The catalytic sites are hosted primarily by the beta subunits. This Blochmanniella pennsylvanica (strain BPEN) protein is ATP synthase subunit beta.